Here is a 144-residue protein sequence, read N- to C-terminus: Large ribosomal subunit protein uL13 (144 aa).

This sequence belongs to the universal ribosomal protein uL13 family. As to quaternary structure, part of the 50S ribosomal subunit.

Its function is as follows. This protein is one of the early assembly proteins of the 50S ribosomal subunit, although it is not seen to bind rRNA by itself. It is important during the early stages of 50S assembly. This is Large ribosomal subunit protein uL13 from Mycoplasmopsis synoviae (strain 53) (Mycoplasma synoviae).